The sequence spans 892 residues: MDQPEAPCSSTGPRLAVARELLLAALEELSQEQLKRFRHKLRDVGPDGRSIPWGRLERADAVDLAEQLAQFYGPEPALEVARKTLKRADARDVAAQLQERRLQRLGLGSGTLLSVSEYKKKYREHVLQLHARVKERNARSVKITKRFTKLLIAPESAAPEEAMGPAEEPEPGRARRSDTHTFNRLFRRDEEGRRPLTVVLQGPAGIGKTMAAKKILYDWAAGKLYQGQVDFAFFMPCGELLERPGTRSLADLILDQCPDRGAPVPQMLAQPQRLLFILDGADELPALGGPEAAPCTDPFEAASGARVLGGLLSKALLPTALLLVTTRAAAPGRLQGRLCSPQCAEVRGFSDKDKKKYFYKYFRDERRAERAYRFVKENETLFALCFVPFVCWIVCTVLRQQLELGRDLSRTSKTTTSVYLLFITSVLSSAPVADGPRLQGDLRNLCRLAREGVLGRRAQFAEKELEQLELRGSKVQTLFLSKKELPGVLETEVTYQFIDQSFQEFLAALSYLLEDGGVPRTAAGGVGTLLRGDAQPHSHLVLTTRFLFGLLSAERMRDIERHFGCMVSERVKQEALRWVQGQGQGCPGVAPEVTEGAKGLEDTEEPEEEEEGEEPNYPLELLYCLYETQEDAFVRQALCRFPELALQRVRFCRMDVAVLSYCVRCCPAGQALRLISCRLVAAQEKKKKSLGKRLQASLGGGSSSQGTTKQLPASLLHPLFQAMTDPLCHLSSLTLSHCKLPDAVCRDLSEALRAAPALTELGLLHNRLSEAGLRMLSEGLAWPQCRVQTVRVQLPDPQRGLQYLVGMLRQSPALTTLDLSGCQLPAPMVTYLCAVLQHQGCGLQTLSLASVELSEQSLQELQAVKRAKPDLVITHPALDGHPQPPKELISTF.

The Pyrin domain occupies 1 to 103 (MDQPEAPCSS…AAQLQERRLQ (103 aa)). Positions 158–181 (APEEAMGPAEEPEPGRARRSDTHT) are disordered. Residues 170–181 (EPGRARRSDTHT) are compositionally biased toward basic and acidic residues. Residues 196–513 (LTVVLQGPAG…EFLAALSYLL (318 aa)) enclose the NACHT domain. Position 202–209 (202–209 (GPAGIGKT)) interacts with ATP. The tract at residues 352–356 (KDKKK) is disordered. Residues 462–487 (EKELEQLELRGSKVQTLFLSKKELPG) form an LRR 1 repeat. The disordered stretch occupies residues 590-614 (APEVTEGAKGLEDTEEPEEEEEGEE). Residues 602–614 (DTEEPEEEEEGEE) are compositionally biased toward acidic residues. 4 LRR repeats span residues 727-747 (LCHLSSLTLSHCKLPDAVCRD), 755-778 (APALTELGLLHNRLSEAGLRMLSE), 811-834 (SPALTTLDLSGCQLPAPMVTYLCA), and 845-868 (TLSLASVELSEQSLQELQAVKRAK).

This sequence belongs to the NLRP family. In terms of assembly, homomultimer; forms the NLRP6 inflammasome polymeric complex, a filament composed of homopolymers in response to pathogens and other damage-associated signals. The core of NLRP6 inflammasomes consists of a signal sensor component (NLRP6), an adapter (PYCARD/ASC), which recruits effector pro-inflammatory caspases (CASP1 and CASP4). Interacts (via pyrin domain) with PYCARD/ASC (via pyrin domain); interaction takes place following NLRP6 activation and formation of liquid-liquid phase separation (LLPS), initiating nucleation which greatly enhances further addition of soluble PYCARD/ASC molecules to the speck in a prion-like polymerization process. Clustered PYCARD/ASC nucleates the formation of CASP1 (or possibly CASP4) filaments through the interaction of their respective CARD domains, acting as a platform for CASP1 polymerization. CASP1 filament formation increases local enzyme concentration, resulting in trans-autocleavage and activation. Active CASP1 then processes IL1B and IL18 precursors, leading to the release of mature cytokines in the extracellular milieu and inflammatory response. Interacts with DHX15. In terms of processing, polyubiquitinated with 'Lys-63'-linked chains, promoting the interaction with PYCARD/ASC and formation of the NLRP6 inflammasome. Deubiquitination by CYLD decreases the interaction with PYCARD/ASC. Expressed in peripheral blood leukocytes, predominantly in granulocytes and, at lower levels, in CD4(+) and CD8(+) T-cells. Expressed in colonic myofibroblasts (at protein level).

The protein localises to the cytoplasm. Its subcellular location is the cytosol. It is found in the inflammasome. The protein resides in the cell membrane. It localises to the nucleus membrane. In terms of biological role, acts as the sensor component of the NLRP6 inflammasome, which mediates inflammasome activation in response to various pathogen-associated signals, leading to maturation and secretion of IL1B and IL18. Inflammasomes are supramolecular complexes that assemble in the cytosol in response to pathogens and other damage-associated signals and play critical roles in innate immunity and inflammation. Acts as a recognition receptor (PRR): recognizes and binds specific pathogens and other damage-associated signals, such as lipoteichoic acid (LTA), a cell-wall component of Gram-positive bacteria, or double stranded RNA (dsRNA). May also recognize and bind lipopolysaccharide (LPS), a major component of the outer membrane of Gram-negative bacteria; however, LPS is probably not a major activator of the NLRP6 inflammasome. Following LTA- or dsRNA-binding, NLRP6 undergoes liquid-liquid phase separation (LLPS), enhancing multivalent interactions, an essential step for the formation of the NLRP6 inflammasome polymeric complex. The NLRP6 inflammasome acts by promoting recruitment of effector pro-inflammatory caspases (CASP1 and/or CASP4) that catalyze maturation and secretion of IL1B and IL18 in the extracellular milieu. The NLRP6 inflammasome plays a central role in the maintenance of epithelial integrity and host defense against microbial infections in the intestine. Required to restrict infection against Gram-positive bacteria by recognizing lipoteichoic acid (LTA), leading to recruitment of CASP4 and CASP1, and subsequent maturation and secretion of IL1B and IL18. Involved in intestinal antiviral innate immunity together with DHX15: recognizes and binds viral dsRNA to restrict infection by enteric viruses through the interferon pathway and GSDMD-dependent release of IL18. Required to prevent infection by the apicomplexan parasite Cryptosporidium in enterocytes by promoting GSDMD-dependent release of IL18. The NLRP6 inflammasome may also regulate the gut microbiota composition by acting as a sensor of microbiota-associated metabolites to form a PYCARD/ASC-dependent inflammasome for downstream IL18 release and secretion of antimicrobial peptides. Essential for gut mucosal self-renewal and proliferation. Regulate mucus secretion in an inflammasome- and autophagy-dependent manner to prevent invasion by enteric bacteria,. During systemic bacterial infections, the NLRP6 inflammasome negatively regulates neutrophil recruitment and neutrophil extracellular traps (NETs) formation. May promote peripheral nerve recovery following injury via an inflammasome-independent mechanism. The chain is NACHT, LRR and PYD domains-containing protein 6 from Homo sapiens (Human).